Consider the following 250-residue polypeptide: Triosephosphate isomerase (250 aa).

Position 9–11 (9–11 (NWK)) interacts with substrate. His94 acts as the Electrophile in catalysis. Residue Glu165 is the Proton acceptor of the active site. Residues Gly171, Ser211, and 232 to 233 (GG) each bind substrate.

The protein belongs to the triosephosphate isomerase family. In terms of assembly, homodimer.

The protein localises to the cytoplasm. The catalysed reaction is D-glyceraldehyde 3-phosphate = dihydroxyacetone phosphate. It participates in carbohydrate biosynthesis; gluconeogenesis. The protein operates within carbohydrate degradation; glycolysis; D-glyceraldehyde 3-phosphate from glycerone phosphate: step 1/1. Functionally, involved in the gluconeogenesis. Catalyzes stereospecifically the conversion of dihydroxyacetone phosphate (DHAP) to D-glyceraldehyde-3-phosphate (G3P). This Alkalilimnicola ehrlichii (strain ATCC BAA-1101 / DSM 17681 / MLHE-1) protein is Triosephosphate isomerase.